Here is a 186-residue protein sequence, read N- to C-terminus: uncharacterized protein (186 aa).

CBS domains lie at 10 to 69 and 77 to 133; these read IMKK…KLPP and ISSG…IIST.

This is an uncharacterized protein from Methanocaldococcus jannaschii (strain ATCC 43067 / DSM 2661 / JAL-1 / JCM 10045 / NBRC 100440) (Methanococcus jannaschii).